The primary structure comprises 303 residues: Vacuolar protein sorting-associated protein 26B (303 aa).

It belongs to the VPS26 family. Component of the retromer complex which consists of VPS29 (MAG1), VPS26 (VPS26A or VPS26B), VPS35 (VPS35A or VPS35B or VPS35C), VPS5/17 (SNX1 or SNX2A or SNX2B). Component of a retromer subcomplex consisting of VPS29 (MAG1), VPS26 (VPS26A or VPS26B), VPS35 (VPS35A or VPS35B or VPS35C).

The protein resides in the cytoplasm. It localises to the endosome membrane. It is found in the prevacuolar compartment membrane. Its subcellular location is the golgi apparatus. The protein localises to the trans-Golgi network membrane. Its function is as follows. Plays a role in vesicular protein sorting. Component of the membrane-associated retromer complex which is essential in endosome-to-Golgi retrograde transport. The VPS29-VPS26-VPS35 subcomplex may be involved in recycling of specific cargos from endosome to the plasma membrane. The chain is Vacuolar protein sorting-associated protein 26B (VPS26B) from Arabidopsis thaliana (Mouse-ear cress).